The primary structure comprises 177 residues: Secretion monitor (177 aa).

The signal sequence occupies residues 1-37 (MIGILNRWRQFGRRYFWPHLLLGMVAASLGVPSNLSG).

The protein belongs to the SecM family.

The protein resides in the cytoplasm. The protein localises to the cytosol. Its subcellular location is the periplasm. Functionally, regulates secA expression by translational coupling of the secM secA operon. Translational pausing at a specific Pro residue 5 residues before the end of the protein may allow disruption of a mRNA repressor helix that normally suppresses secA translation initiation. This is Secretion monitor from Yersinia pseudotuberculosis serotype O:1b (strain IP 31758).